A 171-amino-acid chain; its full sequence is tRNA-specific adenosine deaminase (171 aa).

One can recognise a CMP/dCMP-type deaminase domain in the interval 6-133 (EEQTYFMQEA…ERLNHRVQVE (128 aa)). Histidine 57 is a binding site for Zn(2+). Glutamate 59 serves as the catalytic Proton donor. Residues cysteine 87 and cysteine 90 each contribute to the Zn(2+) site.

Belongs to the cytidine and deoxycytidylate deaminase family. In terms of assembly, homodimer. It depends on Zn(2+) as a cofactor.

The enzyme catalyses adenosine(34) in tRNA + H2O + H(+) = inosine(34) in tRNA + NH4(+). Catalyzes the deamination of adenosine to inosine at the wobble position 34 of tRNA(Arg2). The chain is tRNA-specific adenosine deaminase from Streptococcus pyogenes serotype M1.